A 129-amino-acid polypeptide reads, in one-letter code: Small ribosomal subunit protein uS11 (129 aa).

The protein belongs to the universal ribosomal protein uS11 family. As to quaternary structure, part of the 30S ribosomal subunit. Interacts with proteins S7 and S18. Binds to IF-3.

In terms of biological role, located on the platform of the 30S subunit, it bridges several disparate RNA helices of the 16S rRNA. Forms part of the Shine-Dalgarno cleft in the 70S ribosome. This is Small ribosomal subunit protein uS11 from Bacteroides thetaiotaomicron (strain ATCC 29148 / DSM 2079 / JCM 5827 / CCUG 10774 / NCTC 10582 / VPI-5482 / E50).